A 365-amino-acid polypeptide reads, in one-letter code: Protein BIIDXI (365 aa).

Positions Met-1–Cys-21 are cleaved as a signal peptide. 3 N-linked (GlcNAc...) asparagine glycosylation sites follow: Asn-48, Asn-121, and Asn-208.

Interacts with PME3. As to expression, mainly expressed in vascular tissues of roots, leaves, stamens and petals.

The protein resides in the secreted. It is found in the cell wall. Together with At5g11420, acts as a positive regulator of PME3 activity during several developmental processes, including reproductive organ development, hypocotyls elongation, seed germination and endosperm (testa) rupture at the micropyle, probably by modulating the pectin methylation status in cell walls. Involved in the regulation of pectin methylation degree to modulate cell wall physiology during cell separation, hypocotyl growth and embryo development. Required during embryo development, especially to regulate homogalacturonans (HG) methyl esterification in endosperm cell walls, a process related to embryo bending. Also implicated in hypocotyl growth and gravitropic response via the regulation of auxin efflux. Also regulates cell wall pectin upon root-knot nematode Meloidogyne incognita infection. The protein is Protein BIIDXI of Arabidopsis thaliana (Mouse-ear cress).